Here is a 156-residue protein sequence, read N- to C-terminus: ATP synthase subunit b (156 aa).

Residues 11–31 (AIAFILFVWFCMKYVWPPLMA) traverse the membrane as a helical segment.

Belongs to the ATPase B chain family. In terms of assembly, F-type ATPases have 2 components, F(1) - the catalytic core - and F(0) - the membrane proton channel. F(1) has five subunits: alpha(3), beta(3), gamma(1), delta(1), epsilon(1). F(0) has three main subunits: a(1), b(2) and c(10-14). The alpha and beta chains form an alternating ring which encloses part of the gamma chain. F(1) is attached to F(0) by a central stalk formed by the gamma and epsilon chains, while a peripheral stalk is formed by the delta and b chains.

The protein resides in the cell inner membrane. F(1)F(0) ATP synthase produces ATP from ADP in the presence of a proton or sodium gradient. F-type ATPases consist of two structural domains, F(1) containing the extramembraneous catalytic core and F(0) containing the membrane proton channel, linked together by a central stalk and a peripheral stalk. During catalysis, ATP synthesis in the catalytic domain of F(1) is coupled via a rotary mechanism of the central stalk subunits to proton translocation. Its function is as follows. Component of the F(0) channel, it forms part of the peripheral stalk, linking F(1) to F(0). This is ATP synthase subunit b from Salmonella agona (strain SL483).